Reading from the N-terminus, the 423-residue chain is Mannose-6-phosphate isomerase (423 aa).

At Ala-2 the chain carries N-acetylalanine. Residues Ser-102 and Ser-108 each carry the phosphoserine modification. Zn(2+)-binding residues include Gln-110, His-112, Glu-137, and His-276. Arg-295 is a catalytic residue.

It belongs to the mannose-6-phosphate isomerase type 1 family. Requires Zn(2+) as cofactor.

The protein localises to the cytoplasm. The catalysed reaction is D-mannose 6-phosphate = D-fructose 6-phosphate. It functions in the pathway nucleotide-sugar biosynthesis; GDP-alpha-D-mannose biosynthesis; alpha-D-mannose 1-phosphate from D-fructose 6-phosphate: step 1/2. Isomerase that catalyzes the interconversion of fructose-6-P and mannose-6-P and has a critical role in the supply of D-mannose derivatives required for many eukaryotic glycosylation reactions. This is Mannose-6-phosphate isomerase (MPI) from Macaca fascicularis (Crab-eating macaque).